The chain runs to 124 residues: Small ribosomal subunit protein uS12 (124 aa).

Aspartate 89 is subject to 3-methylthioaspartic acid.

The protein belongs to the universal ribosomal protein uS12 family. Part of the 30S ribosomal subunit. Contacts proteins S8 and S17. May interact with IF1 in the 30S initiation complex.

Functionally, with S4 and S5 plays an important role in translational accuracy. Interacts with and stabilizes bases of the 16S rRNA that are involved in tRNA selection in the A site and with the mRNA backbone. Located at the interface of the 30S and 50S subunits, it traverses the body of the 30S subunit contacting proteins on the other side and probably holding the rRNA structure together. The combined cluster of proteins S8, S12 and S17 appears to hold together the shoulder and platform of the 30S subunit. The protein is Small ribosomal subunit protein uS12 of Acinetobacter baylyi (strain ATCC 33305 / BD413 / ADP1).